The following is a 278-amino-acid chain: Proline-rich 28 kDa antigen homolog (278 aa).

The signal sequence occupies residues 1–28 (MIQSTQTWRVLAGGLAATAMGVTVFAGG).

This sequence to M.tuberculosis Rv0040c.

The polypeptide is Proline-rich 28 kDa antigen homolog (Mycobacterium leprae (strain TN)).